Consider the following 452-residue polypeptide: Bifunctional protein GlmU (452 aa).

Positions 1 to 231 (MSRTCLAVIL…EAELAGCNNR (231 aa)) are pyrophosphorylase. UDP-N-acetyl-alpha-D-glucosamine contacts are provided by residues 10 to 13 (LAAG), Lys-24, Gln-77, 82 to 83 (GT), 105 to 107 (YGD), Gly-143, Glu-157, Asn-172, and Asn-229. Mg(2+) is bound at residue Asp-107. Asn-229 lines the Mg(2+) pocket. The segment at 232–252 (AELAVIEKLWQERRRHELMLS) is linker. Residues 253–452 (GVSMIAPETV…MAIKAFSGKV (200 aa)) are N-acetyltransferase. UDP-N-acetyl-alpha-D-glucosamine-binding residues include Arg-318 and Lys-336. The Proton acceptor role is filled by His-348. UDP-N-acetyl-alpha-D-glucosamine is bound by residues Tyr-351 and Asn-362. Residues Ala-365, 371–372 (NY), Ser-390, Ser-408, and Arg-425 each bind acetyl-CoA.

In the N-terminal section; belongs to the N-acetylglucosamine-1-phosphate uridyltransferase family. It in the C-terminal section; belongs to the transferase hexapeptide repeat family. Homotrimer. The cofactor is Mg(2+).

It localises to the cytoplasm. It carries out the reaction alpha-D-glucosamine 1-phosphate + acetyl-CoA = N-acetyl-alpha-D-glucosamine 1-phosphate + CoA + H(+). The catalysed reaction is N-acetyl-alpha-D-glucosamine 1-phosphate + UTP + H(+) = UDP-N-acetyl-alpha-D-glucosamine + diphosphate. It participates in nucleotide-sugar biosynthesis; UDP-N-acetyl-alpha-D-glucosamine biosynthesis; N-acetyl-alpha-D-glucosamine 1-phosphate from alpha-D-glucosamine 6-phosphate (route II): step 2/2. The protein operates within nucleotide-sugar biosynthesis; UDP-N-acetyl-alpha-D-glucosamine biosynthesis; UDP-N-acetyl-alpha-D-glucosamine from N-acetyl-alpha-D-glucosamine 1-phosphate: step 1/1. It functions in the pathway bacterial outer membrane biogenesis; LPS lipid A biosynthesis. In terms of biological role, catalyzes the last two sequential reactions in the de novo biosynthetic pathway for UDP-N-acetylglucosamine (UDP-GlcNAc). The C-terminal domain catalyzes the transfer of acetyl group from acetyl coenzyme A to glucosamine-1-phosphate (GlcN-1-P) to produce N-acetylglucosamine-1-phosphate (GlcNAc-1-P), which is converted into UDP-GlcNAc by the transfer of uridine 5-monophosphate (from uridine 5-triphosphate), a reaction catalyzed by the N-terminal domain. The chain is Bifunctional protein GlmU from Allorhizobium ampelinum (strain ATCC BAA-846 / DSM 112012 / S4) (Agrobacterium vitis (strain S4)).